Reading from the N-terminus, the 255-residue chain is 5'-nucleotidase SurE (255 aa).

A divalent metal cation is bound by residues D16, D17, S47, and N100.

The protein belongs to the SurE nucleotidase family. A divalent metal cation is required as a cofactor.

The protein resides in the cytoplasm. It carries out the reaction a ribonucleoside 5'-phosphate + H2O = a ribonucleoside + phosphate. In terms of biological role, nucleotidase that shows phosphatase activity on nucleoside 5'-monophosphates. The polypeptide is 5'-nucleotidase SurE (Vibrio vulnificus (strain YJ016)).